The primary structure comprises 123 residues: MPTIQQLIRKPRQPKVKRSKSQHLEQCPQKRGVCTRVYTTTPKKPNSAMRKVAKVRLTNGYEVISYIPGESHNLQEHSVVLIRGGRVKDLPGVRYHILRGVLDTQGVKDRKQRRSKYGAKRPK.

A disordered region spans residues 1–28 (MPTIQQLIRKPRQPKVKRSKSQHLEQCP). Positions 9-21 (RKPRQPKVKRSKS) are enriched in basic residues. A 3-methylthioaspartic acid modification is found at Asp89.

It belongs to the universal ribosomal protein uS12 family. Part of the 30S ribosomal subunit. Contacts proteins S8 and S17. May interact with IF1 in the 30S initiation complex.

With S4 and S5 plays an important role in translational accuracy. Its function is as follows. Interacts with and stabilizes bases of the 16S rRNA that are involved in tRNA selection in the A site and with the mRNA backbone. Located at the interface of the 30S and 50S subunits, it traverses the body of the 30S subunit contacting proteins on the other side and probably holding the rRNA structure together. The combined cluster of proteins S8, S12 and S17 appears to hold together the shoulder and platform of the 30S subunit. This chain is Small ribosomal subunit protein uS12, found in Ruegeria pomeroyi (strain ATCC 700808 / DSM 15171 / DSS-3) (Silicibacter pomeroyi).